A 66-amino-acid chain; its full sequence is Conotoxin Cl14.1b (66 aa).

The signal sequence occupies residues 1–19; sequence MNVTVMFLVLLLTMPLTDG. The propeptide occupies 20-47; it reads FNIRAINGGELFGLVQRDAGNALDHGFY.

The protein belongs to the conotoxin L superfamily. In terms of processing, contains 2 disulfide bonds. In terms of tissue distribution, expressed by the venom duct.

Its subcellular location is the secreted. This chain is Conotoxin Cl14.1b, found in Californiconus californicus (California cone).